Here is a 218-residue protein sequence, read N- to C-terminus: Guanylate kinase (218 aa).

The 184-residue stretch at 5 to 188 (GNLFILSAPS…ALLDLTTIVN (184 aa)) folds into the Guanylate kinase-like domain. 12–19 (APSGAGKS) lines the ATP pocket.

It belongs to the guanylate kinase family.

It is found in the cytoplasm. It carries out the reaction GMP + ATP = GDP + ADP. Essential for recycling GMP and indirectly, cGMP. The sequence is that of Guanylate kinase from Colwellia psychrerythraea (strain 34H / ATCC BAA-681) (Vibrio psychroerythus).